Reading from the N-terminus, the 170-residue chain is Small ribosomal subunit protein uS5 (170 aa).

The region spanning 11–74 (ILEKLVHINR…ETARRVLIHV (64 aa)) is the S5 DRBM domain.

Belongs to the universal ribosomal protein uS5 family. In terms of assembly, part of the 30S ribosomal subunit. Contacts proteins S4 and S8.

With S4 and S12 plays an important role in translational accuracy. Functionally, located at the back of the 30S subunit body where it stabilizes the conformation of the head with respect to the body. This chain is Small ribosomal subunit protein uS5, found in Pelagibacter ubique (strain HTCC1062).